The chain runs to 438 residues: sn-glycerol-3-phosphate-binding periplasmic protein UgpB (438 aa).

An N-terminal signal peptide occupies residues Met1–Ala23. Sn-glycerol 3-phosphate-binding residues include Tyr65, Glu89, Ser144, Ser270, Gly307, Tyr346, and Arg397.

It belongs to the bacterial solute-binding protein 1 family. As to quaternary structure, the complex is composed of two ATP-binding proteins (UgpC), two transmembrane proteins (UgpA and UgpE) and a solute-binding protein (UgpB).

Its subcellular location is the periplasm. Part of the ABC transporter complex UgpBAEC involved in sn-glycerol-3-phosphate (G3P) import. Binds G3P. This is sn-glycerol-3-phosphate-binding periplasmic protein UgpB (ugpB) from Shigella flexneri.